A 367-amino-acid polypeptide reads, in one-letter code: Uroporphyrinogen decarboxylase (367 aa).

N-acetylmethionine is present on M1. R37, A39, R41, R50, D86, Y164, S219, and H339 together coordinate coproporphyrinogen I. R37, A39, and R41 together coordinate coproporphyrinogen III. Coproporphyrinogen III is bound by residues D86, Y164, S219, and H339.

Belongs to the uroporphyrinogen decarboxylase family. In terms of assembly, homodimer.

It is found in the cytoplasm. The protein localises to the cytosol. It catalyses the reaction uroporphyrinogen III + 4 H(+) = coproporphyrinogen III + 4 CO2. The enzyme catalyses uroporphyrinogen I + 4 H(+) = coproporphyrinogen I + 4 CO2. Its pathway is porphyrin-containing compound metabolism; protoporphyrin-IX biosynthesis; coproporphyrinogen-III from 5-aminolevulinate: step 4/4. In terms of biological role, catalyzes the sequential decarboxylation of the four acetate side chains of uroporphyrinogen to form coproporphyrinogen and participates in the fifth step in the heme biosynthetic pathway. Isomer I or isomer III of uroporphyrinogen may serve as substrate, but only coproporphyrinogen III can ultimately be converted to heme. In vitro also decarboxylates pentacarboxylate porphyrinogen I. The polypeptide is Uroporphyrinogen decarboxylase (Pongo abelii (Sumatran orangutan)).